A 198-amino-acid polypeptide reads, in one-letter code: Na(+)-translocating NADH-quinone reductase subunit E (198 aa).

A run of 6 helical transmembrane segments spans residues 11 to 31 (SIFI…FLAV), 39 to 59 (FGLG…NNLV), 77 to 97 (FLNF…LEMV), 110 to 130 (GIFL…SFMV), 140 to 160 (IVYG…LAGI), and 176 to 196 (LGIT…FSGV).

It belongs to the NqrDE/RnfAE family. Composed of six subunits; NqrA, NqrB, NqrC, NqrD, NqrE and NqrF.

It localises to the cell inner membrane. It carries out the reaction a ubiquinone + n Na(+)(in) + NADH + H(+) = a ubiquinol + n Na(+)(out) + NAD(+). In terms of biological role, NQR complex catalyzes the reduction of ubiquinone-1 to ubiquinol by two successive reactions, coupled with the transport of Na(+) ions from the cytoplasm to the periplasm. NqrA to NqrE are probably involved in the second step, the conversion of ubisemiquinone to ubiquinol. The sequence is that of Na(+)-translocating NADH-quinone reductase subunit E from Vibrio campbellii (strain ATCC BAA-1116).